The sequence spans 261 residues: uncharacterized protein (261 aa).

Helical transmembrane passes span 4 to 21 (RLIAIATFVVTFGILIVL) and 33 to 55 (FSILSILAAVLTIAAYFFTLVLF).

It is found in the cell membrane. This is an uncharacterized protein from Archaeoglobus fulgidus (strain ATCC 49558 / DSM 4304 / JCM 9628 / NBRC 100126 / VC-16).